A 539-amino-acid polypeptide reads, in one-letter code: MSLFNNHPELDFTMREMLIDWLINIYFDQNVEISNRSLVSGIMMIDRYIYLEKTSISRKMYQGIGVICLNLACKLDDTKILGLDYCEYICAGIYTADILSNLEKRILKVFKFGLHFKNILHYIKLISIKENVDDTVYVFARLMLITILFKTNYLTIKTKSMAKNLMNFSKWFVNNKNVEIKNPIHIYFFTELRRYITHPHFTSINRLAKEFRIFSLIKSRIPNIIYLEKPNVFSKEIIPIELQNSLTIEYTENQLNNMNVIEKLGIGSFGLVNKVKFDNTEIALKTHHPDDSKEIIVESLREINNMIMLDHPNIIKMHGYYYSQGITHIGLELCDMPLYKKLDKGNLSPELKKSFIIQLLCGLKYLHNNNIIHRDLTSSNVLIKGDTLKICDFGCSRFVYDKKIIGNYSLDVCSVRYRAIEILNGILPYNEKIDIWSCACLIAEILGEKFLFRGRNEIEVLDSINRLLGKTVGSGRVGFSMLEKHYPNETQIIYKMLDFDPSNRPNAKLVLKIFSECFVAQSELLVNNQKTTIDKNQIS.

A Cyclin N-terminal domain is found at 1 to 115; it reads MSLFNNHPEL…ILKVFKFGLH (115 aa). Residues 258–519 enclose the Protein kinase domain; sequence MNVIEKLGIG…VLKIFSECFV (262 aa). Residues 264 to 272 and K285 contribute to the ATP site; that span reads LGIGSFGLV. D375 functions as the Proton acceptor in the catalytic mechanism.

This sequence belongs to the protein kinase superfamily. Ser/Thr protein kinase family.

The enzyme catalyses L-seryl-[protein] + ATP = O-phospho-L-seryl-[protein] + ADP + H(+). The catalysed reaction is L-threonyl-[protein] + ATP = O-phospho-L-threonyl-[protein] + ADP + H(+). This is Putative serine/threonine-protein kinase L670 from Acanthamoeba polyphaga mimivirus (APMV).